Here is a 509-residue protein sequence, read N- to C-terminus: Protein disulfide-isomerase (509 aa).

The first 19 residues, Met-1–Ala-19, serve as a signal peptide directing secretion. A Thioredoxin 1 domain is found at Asp-20–Gly-136. Catalysis depends on nucleophile residues Cys-55 and Cys-58. Residues Cys-55 and Cys-58 are joined by a disulfide bond. Lys-202 carries the post-translational modification N6-acetyllysine. Residues Lys-224 and Lys-273 each carry the N6-succinyllysine modification. A phosphoserine mark is found at Ser-333 and Ser-359. The 143-residue stretch at Glu-335–Gln-477 folds into the Thioredoxin 2 domain. Catalysis depends on nucleophile residues Cys-399 and Cys-402. Cysteines 399 and 402 form a disulfide. The residue at position 429 (Ser-429) is a Phosphoserine. Positions Glu-473 to Leu-509 are disordered. The span at Ala-480–Asp-501 shows a compositional bias: acidic residues. A Prevents secretion from ER motif is present at residues Lys-506–Leu-509.

Belongs to the protein disulfide isomerase family. Heterodimer; heterodimerizes with the protein microsomal triglyceride transfer MTTP. Homodimer. Homodimer. Monomers and homotetramers may also occur. Interacts with P4HA2, forming a heterotetramer consisting of 2 alpha subunits (P4HA2) and 2 beta (P4HB), where P4HB plays the role of a structural subunit; this tetramer catalyzes the formation of 4-hydroxyproline in collagen. Also constitutes the structural subunit of the microsomal triacylglycerol transfer protein MTTP in mammalian cells. Stabilizes both enzymes and retain them in the ER without contributing to the catalytic activity. Binds UBQLN1. Interacts with ERO1B. Interacts with ILDR2. Interacts with ERN1/IRE1A (via N-terminus); the interaction is enhanced by phosphorylation of P4HB by FAM20C in response to endoplasmic reticulum stress and results in attenuation of ERN1 activity. In terms of processing, phosphorylation of Ser-359 by FAM20C is induced by endoplasmic reticulum stress and results in a functional switch from oxidoreductase to molecular chaperone. It also promotes interaction with ERN1.

Its subcellular location is the endoplasmic reticulum. The protein resides in the endoplasmic reticulum lumen. It localises to the melanosome. The protein localises to the cell membrane. It catalyses the reaction Catalyzes the rearrangement of -S-S- bonds in proteins.. Its function is as follows. This multifunctional protein catalyzes the formation, breakage and rearrangement of disulfide bonds. At the cell surface, seems to act as a reductase that cleaves disulfide bonds of proteins attached to the cell. May therefore cause structural modifications of exofacial proteins. Inside the cell, seems to form/rearrange disulfide bonds of nascent proteins. At high concentrations and following phosphorylation by FAM20C, functions as a chaperone that inhibits aggregation of misfolded proteins. At low concentrations, facilitates aggregation (anti-chaperone activity). May be involved with other chaperones in the structural modification of the TG precursor in hormone biogenesis. Also acts as a structural subunit of various enzymes such as prolyl 4-hydroxylase and microsomal triacylglycerol transfer protein MTTP. Receptor for LGALS9; the interaction retains P4HB at the cell surface of Th2 T helper cells, increasing disulfide reductase activity at the plasma membrane, altering the plasma membrane redox state and enhancing cell migration. This is Protein disulfide-isomerase (P4HB) from Cricetulus griseus (Chinese hamster).